A 288-amino-acid polypeptide reads, in one-letter code: Diaminopimelate epimerase (288 aa).

Asn14 and Asn67 together coordinate substrate. Cys76 (proton donor) is an active-site residue. Substrate-binding positions include 77–78 (GN), Asn166, Asn199, and 217–218 (ER). Cys226 (proton acceptor) is an active-site residue. 227 to 228 (GT) lines the substrate pocket.

The protein belongs to the diaminopimelate epimerase family. As to quaternary structure, homodimer.

The protein resides in the cytoplasm. It carries out the reaction (2S,6S)-2,6-diaminopimelate = meso-2,6-diaminopimelate. Its pathway is amino-acid biosynthesis; L-lysine biosynthesis via DAP pathway; DL-2,6-diaminopimelate from LL-2,6-diaminopimelate: step 1/1. Its function is as follows. Catalyzes the stereoinversion of LL-2,6-diaminopimelate (L,L-DAP) to meso-diaminopimelate (meso-DAP), a precursor of L-lysine and an essential component of the bacterial peptidoglycan. The protein is Diaminopimelate epimerase of Bacillus cereus (strain ATCC 14579 / DSM 31 / CCUG 7414 / JCM 2152 / NBRC 15305 / NCIMB 9373 / NCTC 2599 / NRRL B-3711).